The sequence spans 536 residues: Pentatricopeptide repeat-containing protein At2g06000 (536 aa).

PPR repeat units lie at residues 102–136 (SFWT…GVSP), 137–167 (NNRL…SFEV), 170–200 (CCMV…HLRF), 205–239 (DTKT…GCEP), 240–274 (DIVT…SVCS), 276–310 (DVVT…GIYP), 311–345 (TNVT…GCFP), 346–380 (DVVT…GMFP), 381–415 (NAFT…DIIP), 416–450 (QPFM…KCKP), 451–485 (DKIT…GCSP), and 486–523 (DKIT…NVVP).

Belongs to the PPR family. P subfamily.

In Arabidopsis thaliana (Mouse-ear cress), this protein is Pentatricopeptide repeat-containing protein At2g06000.